Here is a 236-residue protein sequence, read N- to C-terminus: Small ribosomal subunit protein uS2c (236 aa).

The protein belongs to the universal ribosomal protein uS2 family.

It is found in the plastid. The protein localises to the chloroplast. The polypeptide is Small ribosomal subunit protein uS2c (rps2) (Acorus calamus var. americanus (American sweet flag)).